We begin with the raw amino-acid sequence, 340 residues long: Aurora kinase A- and ninein-interacting protein (340 aa).

Residues 175–340 form an interaction with AURKA region; it reads QREAKRKGEG…DSEGNRVIRH (166 aa). Over residues 178-190 the composition is skewed to basic and acidic residues; sequence AKRKGEGLRESKT. Positions 178 to 209 are disordered; it reads AKRKGEGLRESKTDCPGMGSHIRPPGSKCHQP. The tract at residues 266–340 is interaction with RBBP8/CtIP; the sequence is RDSWSQLFTE…DSEGNRVIRH (75 aa). Ser277 is subject to Phosphoserine. Residues 293-317 form a disordered region; that stretch reads DVTNARNQGSGQFPDSPQAQGQDGP. Positions 296–313 are enriched in polar residues; the sequence is NARNQGSGQFPDSPQAQG.

This sequence belongs to the AUNIP family. In terms of assembly, interacts (via C-terminus) with AURKA (via C-terminus). Interacts (via N-terminus) with NIN; this interaction blocks NIN phosphorylation by both AURKA and GSK3B. Identified in a complex with NIN and AURKA. Interacts with RBBP8/CtIP.

The protein localises to the nucleus. The protein resides in the chromosome. Its subcellular location is the cytoplasm. It is found in the cytoskeleton. It localises to the microtubule organizing center. The protein localises to the centrosome. The protein resides in the spindle pole. Functionally, DNA-binding protein that accumulates at DNA double-strand breaks (DSBs) following DNA damage and promotes DNA resection and homologous recombination. Serves as a sensor of DNA damage: binds DNA with a strong preference for DNA substrates that mimic structures generated at stalled replication forks, and anchors RBBP8/CtIP to DSB sites to promote DNA end resection and ensuing homologous recombination repair. Inhibits non-homologous end joining (NHEJ). Required for the dynamic movement of AURKA at the centrosomes and spindle apparatus during the cell cycle. The chain is Aurora kinase A- and ninein-interacting protein from Mus musculus (Mouse).